The chain runs to 305 residues: NAD kinase 2 (305 aa).

Asp-78 acts as the Proton acceptor in catalysis. NAD(+) is bound by residues 78-79, 152-153, Asp-182, 193-198, and Asn-251; these read DG, NE, and TAYSLS.

It belongs to the NAD kinase family. Requires a divalent metal cation as cofactor.

It is found in the cytoplasm. The catalysed reaction is NAD(+) + ATP = ADP + NADP(+) + H(+). Its function is as follows. Involved in the regulation of the intracellular balance of NAD and NADP, and is a key enzyme in the biosynthesis of NADP. Catalyzes specifically the phosphorylation on 2'-hydroxyl of the adenosine moiety of NAD to yield NADP. The polypeptide is NAD kinase 2 (Synechococcus sp. (strain ATCC 27144 / PCC 6301 / SAUG 1402/1) (Anacystis nidulans)).